Reading from the N-terminus, the 420-residue chain is Torsin-4A (420 aa).

Residues 130-150 traverse the membrane as a helical segment; it reads CLLLFIAIVCFQIFNAIENLD. 202–209 serves as a coordination point for ATP; it reads GPSGVGKS.

It belongs to the ClpA/ClpB family. Torsin subfamily.

The protein localises to the membrane. The protein is Torsin-4A (tor4a) of Xenopus tropicalis (Western clawed frog).